The following is a 310-amino-acid chain: GTPase Era (310 aa).

In terms of domain architecture, Era-type G spans R17–E184. The tract at residues G25–S32 is G1. G25–S32 contributes to the GTP binding site. Positions Q51–A55 are G2. Positions D72–G75 are G3. Residues D72 to I76 and N134 to D137 each bind GTP. Positions N134–D137 are G4. Residues I163 to A165 are G5. One can recognise a KH type-2 domain in the interval L215–E292.

It belongs to the TRAFAC class TrmE-Era-EngA-EngB-Septin-like GTPase superfamily. Era GTPase family. Monomer.

The protein localises to the cytoplasm. Its subcellular location is the cell inner membrane. Its function is as follows. An essential GTPase that binds both GDP and GTP, with rapid nucleotide exchange. Plays a role in 16S rRNA processing and 30S ribosomal subunit biogenesis and possibly also in cell cycle regulation and energy metabolism. The sequence is that of GTPase Era from Sinorhizobium medicae (strain WSM419) (Ensifer medicae).